Consider the following 303-residue polypeptide: 1-acyl-sn-glycerol-3-phosphate acyltransferase (303 aa).

The HXXXXD motif signature appears at 82 to 87; sequence HQSTLD. Positions 278–303 are disordered; sequence NEPVPSVSISNDVNTHNEGSSVKKMH. The span at 284 to 297 shows a compositional bias: polar residues; it reads VSISNDVNTHNEGS.

The protein belongs to the 1-acyl-sn-glycerol-3-phosphate acyltransferase family.

It localises to the lipid droplet. It catalyses the reaction a 1-acyl-sn-glycero-3-phosphate + an acyl-CoA = a 1,2-diacyl-sn-glycero-3-phosphate + CoA. The catalysed reaction is a 1-acyl-sn-glycero-3-phosphocholine + an acyl-CoA = a 1,2-diacyl-sn-glycero-3-phosphocholine + CoA. The enzyme catalyses a 1-acyl-sn-glycero-3-phosphoethanolamine + an acyl-CoA = a 1,2-diacyl-sn-glycero-3-phosphoethanolamine + CoA. It carries out the reaction 1-hexadecanoyl-sn-glycero-3-phosphate + (9Z)-octadecenoyl-CoA = 1-hexadecanoyl-2-(9Z-octadecenoyl)-sn-glycero-3-phosphate + CoA. It catalyses the reaction 1-octadecanoyl-sn-glycero-3-phosphate + (9Z)-octadecenoyl-CoA = 1-octadecanoyl-2-(9Z-octadecenoyl)-sn-glycero-3-phosphate + CoA. The catalysed reaction is 1-(9Z-octadecenoyl)-sn-glycero-3-phospho-L-serine + (9Z)-octadecenoyl-CoA = 1,2-di-(9Z)-octadecenoyl-sn-glycero-3-phospho-L-serine + CoA. The enzyme catalyses a 1-acyl-sn-glycero-3-phospho-(1D-myo-inositol) + (9Z)-octadecenoyl-CoA = a 1-acyl-2-(9Z-octadecenoyl)-sn-glycero-3-phospho-(1D-myo-inositol) + CoA. It carries out the reaction 1-heptadecanoyl-sn-glycero-3-phosphate + (9Z)-octadecenoyl-CoA = 1-heptadecanoyl-2-(9Z)-octadecenoyl-sn-glycero-3-phosphate + CoA. It catalyses the reaction 1-heptadecanoyl-sn-glycero-3-phosphate + dodecanoyl-CoA = 1-heptadecanoyl-2-dodecanoyl-sn-glycero-3-phosphate + CoA. The catalysed reaction is 1-heptadecanoyl-sn-glycero-3-phosphate + tetradecanoyl-CoA = 1-heptadecanoyl-2-tetradecanoyl-sn-glycero-3-phosphate + CoA. It participates in phospholipid metabolism; CDP-diacylglycerol biosynthesis; CDP-diacylglycerol from sn-glycerol 3-phosphate: step 2/3. In terms of biological role, acyltransferase that catalyzes the sn-2-specific, acyl-CoA-dependent acylation of lysophosphatidic acid (LPA) to phosphatidic acid (PA) in lipid particles. Together with ALE1, plays a central role in PA biosynthesis. PA is the intermediate, from which all glycerophospholipids are synthesized. Can also acylate lysophosphoinositol (LPI) and lysophosphoserine (LPS). The fatty acyl substrates include 18:1-acyl-CoA, 14:0-acyl-CoA, 12:0-acyl-CoA and 10:0-acyl-CoA. The polypeptide is 1-acyl-sn-glycerol-3-phosphate acyltransferase (Saccharomyces cerevisiae (strain ATCC 204508 / S288c) (Baker's yeast)).